Here is a 471-residue protein sequence, read N- to C-terminus: FAD-linked oxidoreductase sorD (471 aa).

Positions 1-23 (MQAASAFATCLLASVGGNSSAVA) are cleaved as a signal peptide. Asn18, Asn29, Asn174, Asn279, and Asn351 each carry an N-linked (GlcNAc...) asparagine glycan. Positions 41 to 212 (LLTTPSAIVW…TDFSIRTEPV (172 aa)) constitute an FAD-binding PCMH-type domain.

Belongs to the oxygen-dependent FAD-linked oxidoreductase family. Requires FAD as cofactor.

It participates in secondary metabolite biosynthesis. In terms of biological role, FAD-linked oxidoreductase; part of the gene cluster that mediates the biosynthesis of sorbicillinoids, a diverse group of yellow secondary metabolites that restrict growth of competing pathogenic fungi but not of bacteria. Sorbicillinoids biosynthesis requires the action of two PKSs. SorA iteratively combines three acetyl units and the growing chain is modified by the ketoacyl reductase subunit, and optional by the enoyl reductase subunit in the second cycle. The polyketide is then handed over to the PKS SorB, which adds three more acetyl units, and two methyl groups. SorB releases an aldehyde, which undergoes spontaneous cyclization resulting in the formation of sorbicillin or 2',3'-dihydrosorbicillin. The monooxygenase sorC oxidizes sorbicillin and 2',3'-dihydrosorbicillin to 2',3'-dihydrosorbicillinol and sorbicillinol, respectively. The oxidoreductase sorD further converts sorbicillinol into oxosorbicillinol. Sorbicillinol is the building block for the other sorbicillinoids such as disorbicillinol, bisvertinolon, and dihydrobisvertinolone. The polypeptide is FAD-linked oxidoreductase sorD (Penicillium rubens (strain ATCC 28089 / DSM 1075 / NRRL 1951 / Wisconsin 54-1255) (Penicillium chrysogenum)).